The sequence spans 701 residues: Peptide transporter 3 (701 aa).

The next 9 helical transmembrane spans lie at 29–49 (FSFY…HEFS), 55–75 (FIYH…SIMA), 91–111 (IYVV…SYPI), 119–139 (GLFV…AFAA), 154–174 (FSFF…ITPI), 188–208 (FPLA…LFLM), 269–289 (GLLN…LFDQ), 318–338 (INPV…YPAL), and 351–371 (AVGG…QLKV). N-linked (GlcNAc...) asparagine glycans are attached at residues N391 and N432. 3 helical membrane passes run 575–595 (ILWS…LSVT), 611–631 (VLTA…MMIS), and 641–661 (LEFF…ILLA).

It belongs to the major facilitator superfamily. Proton-dependent oligopeptide transporter (POT/PTR) (TC 2.A.17) family. Expressed in the AVA interneuron.

The protein resides in the membrane. In terms of biological role, neuron-specific, H(+)-coupled oligopeptide transporter with broad specificity towards di- and tripeptides in a Na(+) and Cl(-)-independent manner. Shows H(+) channel activity in the absence of peptide substrates. The protein is Peptide transporter 3 (pept-3) of Caenorhabditis elegans.